A 646-amino-acid polypeptide reads, in one-letter code: Threonine--tRNA ligase (646 aa).

Residues 1–61 (MIKITFPDGS…NEDADFVLYK (61 aa)) enclose the TGS domain. Positions 242–541 (DHRKIGKEMQ…LIEHTAGKFP (300 aa)) are catalytic. C337, H388, and H518 together coordinate Zn(2+).

This sequence belongs to the class-II aminoacyl-tRNA synthetase family. As to quaternary structure, homodimer. Zn(2+) is required as a cofactor.

It is found in the cytoplasm. It carries out the reaction tRNA(Thr) + L-threonine + ATP = L-threonyl-tRNA(Thr) + AMP + diphosphate + H(+). In terms of biological role, catalyzes the attachment of threonine to tRNA(Thr) in a two-step reaction: L-threonine is first activated by ATP to form Thr-AMP and then transferred to the acceptor end of tRNA(Thr). Also edits incorrectly charged L-seryl-tRNA(Thr). The chain is Threonine--tRNA ligase from Bacteroides thetaiotaomicron (strain ATCC 29148 / DSM 2079 / JCM 5827 / CCUG 10774 / NCTC 10582 / VPI-5482 / E50).